Here is a 103-residue protein sequence, read N- to C-terminus: MADSSTSELACVYSALILHDDAITAEKMNKIISAANVNVEPYWPGLFALEGKNIGDLICNVGSSGPAAGAPAAGAAGGAVEEKKEEKKAESEDESDDDMGLFD.

The tract at residues Pro-66–Asp-103 is disordered. A compositionally biased stretch (basic and acidic residues) spans Val-80–Glu-90. Residues Ser-91–Asp-103 show a composition bias toward acidic residues.

The protein belongs to the eukaryotic ribosomal protein P1/P2 family. P1 and P2 exist as dimers at the large ribosomal subunit.

Its function is as follows. Plays an important role in the elongation step of protein synthesis. This is Large ribosomal subunit protein P1 from Polyorchis penicillatus (Hydromedusa).